A 258-amino-acid chain; its full sequence is MFKVRVIPCLDVKDGRVVKGVNFVDLRDAGDPVEAAVAYDAAGADELTFLDITATHENRGIMLDVVRRTAEACFMPVTVGGGVRTIDDIRTLLRSGADKVSINSAAVSRREFVKEAAEKFGDQCIVVAIDAKRVSRAGGSDRWEIFTHGGRKSTGIDAIDYAQEVVSLGAGEILLTSMDRDGTRQGFDLPLTRLVADSVSVPVIASGGVGNLDHLVDGIREGHATAVLAASIFHFGEFTIRQAKDHMARAGLPMRLDP.

Residues D11 and D130 contribute to the active site.

This sequence belongs to the HisA/HisF family. In terms of assembly, heterodimer of HisH and HisF.

Its subcellular location is the cytoplasm. The catalysed reaction is 5-[(5-phospho-1-deoxy-D-ribulos-1-ylimino)methylamino]-1-(5-phospho-beta-D-ribosyl)imidazole-4-carboxamide + L-glutamine = D-erythro-1-(imidazol-4-yl)glycerol 3-phosphate + 5-amino-1-(5-phospho-beta-D-ribosyl)imidazole-4-carboxamide + L-glutamate + H(+). The protein operates within amino-acid biosynthesis; L-histidine biosynthesis; L-histidine from 5-phospho-alpha-D-ribose 1-diphosphate: step 5/9. Its function is as follows. IGPS catalyzes the conversion of PRFAR and glutamine to IGP, AICAR and glutamate. The HisF subunit catalyzes the cyclization activity that produces IGP and AICAR from PRFAR using the ammonia provided by the HisH subunit. The polypeptide is Imidazole glycerol phosphate synthase subunit HisF (Nitrobacter hamburgensis (strain DSM 10229 / NCIMB 13809 / X14)).